The sequence spans 283 residues: Elongation factor Ts (283 aa).

Residues 84-87 (TDFV) form an involved in Mg(2+) ion dislocation from EF-Tu region.

Belongs to the EF-Ts family.

Its subcellular location is the cytoplasm. Functionally, associates with the EF-Tu.GDP complex and induces the exchange of GDP to GTP. It remains bound to the aminoacyl-tRNA.EF-Tu.GTP complex up to the GTP hydrolysis stage on the ribosome. This is Elongation factor Ts from Bifidobacterium longum subsp. infantis (strain ATCC 15697 / DSM 20088 / JCM 1222 / NCTC 11817 / S12).